Consider the following 254-residue polypeptide: 5-oxoprolinase subunit A (254 aa).

Belongs to the LamB/PxpA family. In terms of assembly, forms a complex composed of PxpA, PxpB and PxpC.

It catalyses the reaction 5-oxo-L-proline + ATP + 2 H2O = L-glutamate + ADP + phosphate + H(+). Its function is as follows. Catalyzes the cleavage of 5-oxoproline to form L-glutamate coupled to the hydrolysis of ATP to ADP and inorganic phosphate. This is 5-oxoprolinase subunit A from Acinetobacter baylyi (strain ATCC 33305 / BD413 / ADP1).